Consider the following 530-residue polypeptide: Bifunctional purine biosynthesis protein PurH (530 aa).

In terms of domain architecture, MGS-like spans 1–147 (MPSIKRALIS…KNWKHVAIVT (147 aa)).

It belongs to the PurH family.

The enzyme catalyses (6R)-10-formyltetrahydrofolate + 5-amino-1-(5-phospho-beta-D-ribosyl)imidazole-4-carboxamide = 5-formamido-1-(5-phospho-D-ribosyl)imidazole-4-carboxamide + (6S)-5,6,7,8-tetrahydrofolate. It catalyses the reaction IMP + H2O = 5-formamido-1-(5-phospho-D-ribosyl)imidazole-4-carboxamide. The protein operates within purine metabolism; IMP biosynthesis via de novo pathway; 5-formamido-1-(5-phospho-D-ribosyl)imidazole-4-carboxamide from 5-amino-1-(5-phospho-D-ribosyl)imidazole-4-carboxamide (10-formyl THF route): step 1/1. Its pathway is purine metabolism; IMP biosynthesis via de novo pathway; IMP from 5-formamido-1-(5-phospho-D-ribosyl)imidazole-4-carboxamide: step 1/1. The chain is Bifunctional purine biosynthesis protein PurH from Neisseria meningitidis serogroup A / serotype 4A (strain DSM 15465 / Z2491).